The chain runs to 714 residues: MTQMSQVQELFHEAAQQDALAQPQPWWKTQLFMWEPVLFGTWDGVFTSCMINIFGVVLFLRTGWLVGNTGVLLGMFLVSFVILVALVTVLSGIGVGERSSIGSGGVYSMISSVLGGQTGGTIGLLYVFGQCVAGAMYITGFAESISDLLGLGNIWAVRGISVAVLLALLGINLAGVKWIIRLQLLLLFLLAVSTLDFVVGSFTHLDPEHGFIGYSPELLQNNTLPDYSPGESFFTVFGVFFPAATGVMAGFNMGGDLREPAASIPLGSLAAVGISWFLYIIFVFLLGAICTREALRYDFLIAEKVSLMGFLFLLGLYISSLASCMGGLYGAPRILQCIAQEKVIPALACLGQGKGPNKTPVAAICLTSLVTMAFVFVGQVNVLAPIVTINFMLTYVAVDYSYFSLSMCSCSLTPVPEPVLREGAEGLHCSEHLLLEKAPSYGSEGPAQRVLEGTLLEFTKDMDQLLQLTRKLESSQPRQGEGNRTPESQKRKSKKATKQTLQDSFLLDLKSPPSFPVEISDRLPAASWEGQESCWNKQTSKSEGTQPEGTYGEQLVPELCNQSESSGEDFFLKSRLQEQDVWRRSTSFYTHMCNPWVSLLGAVGSLLIMFVIQWVYTLVNMGVAAIVYFYIGRASPGLHLGSASNFSFFRWMRSLLLPSCRSLRSPQEQIILAPSLAKVDMEMTQLTQENADFATRDRYHHSSLVNREQLMPHY.

A run of 6 helical transmembrane segments spans residues 37 to 60 (VLFG…VLFL), 72 to 93 (LLGM…LSGI), 99 to 116 (SSIG…VLGG), 123 to 142 (GLLY…TGFA), 154 to 173 (IWAV…GINL), and 185 to 205 (LLLF…FTHL). An N-linked (GlcNAc...) asparagine glycan is attached at Asn-221. The next 5 helical transmembrane spans lie at 233 to 254 (FFTV…FNMG), 266 to 289 (LGSL…LGAI), 309 to 331 (GFLF…LYGA), 360 to 377 (PVAA…FVFV), and 383 to 403 (LAPI…YSYF). Disordered regions lie at residues 471–503 (KLES…TLQD) and 530–550 (GQES…PEGT). Residues 533-548 (SCWNKQTSKSEGTQPE) show a composition bias toward polar residues. Transmembrane regions (helical) follow at residues 593 to 616 (CNPW…QWVY) and 622 to 643 (GVAA…LGSA).

This sequence belongs to the SLC12A transporter family. In terms of tissue distribution, ubiquitous with very low level in normal skin.

It localises to the membrane. Cation/chloride cotransporter that may play a role in the control of keratinocyte proliferation. The polypeptide is Solute carrier family 12 member 8 (SLC12A8) (Homo sapiens (Human)).